The primary structure comprises 2176 residues: Protein sidekick-2 (2176 aa).

Residues Met-1–Ala-24 form the signal peptide. Residues Gln-25–Phe-1936 lie on the Extracellular side of the membrane. Ig-like C2-type domains lie at Pro-30 to Gln-112, Gly-117 to Thr-204, Pro-219 to Ala-298, Pro-312 to Thr-402, Pro-406 to Val-495, and Thr-500 to Arg-589. Residues Cys-52 and Cys-95 are joined by a disulfide bond. An N-linked (GlcNAc...) asparagine glycan is attached at Asn-197. 4 disulfides stabilise this stretch: Cys-241–Cys-288, Cys-334–Cys-384, Cys-427–Cys-479, and Cys-521–Cys-573. Fibronectin type-III domains follow at residues Ala-596–Glu-692, Pro-697–Gly-793, Pro-798–Asp-897, Pro-901–Glu-995, Ala-999–Ala-1098, Ala-1103–Ser-1201, Gly-1206–Asp-1303, Pro-1307–Arg-1401, Pro-1406–Ala-1503, Ala-1508–Ala-1625, Ala-1630–Ala-1726, Ala-1730–Gly-1825, and Ala-1828–Phe-1930. N-linked (GlcNAc...) asparagine glycosylation occurs at Asn-747. Asn-940 and Asn-952 each carry an N-linked (GlcNAc...) asparagine glycan. Asn-1106 carries an N-linked (GlcNAc...) asparagine glycan. N-linked (GlcNAc...) asparagine glycosylation occurs at Asn-1592. The tract at residues Asp-1712 to Val-1734 is disordered. Residues Ser-1716–Ala-1727 are compositionally biased toward polar residues. A helical membrane pass occupies residues Leu-1937 to Ile-1957. The Cytoplasmic segment spans residues Arg-1958–Val-2176. 3 disordered regions span residues Gly-2013–Glu-2032, Ala-2043–Asn-2070, and Gln-2102–Val-2176. Composition is skewed to polar residues over residues Glu-2044 to Asn-2070 and Val-2119 to Ser-2129. The PDZ-binding signature appears at Ala-2170–Val-2176.

The protein belongs to the sidekick family. As to quaternary structure, homodimer; mediates homophilic interactions to promote cell adhesion. Interacts (via PDZ-binding motif) with MAGI1, MAGI2, DLG2, DLG3 and DLG4. As to expression, expressed in retinal ganglion cells (RGCs) that form synapses in distinct inner plexiform layer (IPL) sublaminae. Specifically expressed in specific subsets of retinal ganglion cells (RGCs), named W3B-RGCs, that specifically respond when the timing of the movement of a small object differs from that of the background, but not when they coincide (at protein level). Also present in excitatory amacrine cell type called VG3-ACs, that provide strong and selective input W3B-RGCs (at protein level). Expressed at low levels in the glomeruli.

Its subcellular location is the cell membrane. The protein localises to the synapse. Adhesion molecule that promotes lamina-specific synaptic connections in the retina and is specifically required for the formation of neuronal circuits that detect motion. Acts by promoting formation of synapses between two specific retinal cell types: the retinal ganglion cells W3B-RGCs and the excitatory amacrine cells VG3-ACs. Formation of synapses between these two cells plays a key role in detection of motion. Promotes synaptic connectivity via homophilic interactions. The chain is Protein sidekick-2 from Mus musculus (Mouse).